We begin with the raw amino-acid sequence, 161 residues long: Allophycocyanin beta chain (161 aa).

N4-methylasparagine is present on Asn-71. Cys-81 is a (2R,3E)-phycocyanobilin binding site.

This sequence belongs to the phycobiliprotein family. Heterodimer of an alpha and a beta chain. Contains one covalently linked phycocyanobilin chromophore.

The protein localises to the plastid. It localises to the chloroplast thylakoid membrane. In terms of biological role, light-harvesting photosynthetic bile pigment-protein from the phycobiliprotein complex. Allophycocyanin has a maximum absorption at approximately 650 nanometers. The polypeptide is Allophycocyanin beta chain (apcB) (Cyanidium caldarium (Red alga)).